The primary structure comprises 324 residues: tRNA uridine(34) hydroxylase (324 aa).

Residues 145-239 (NDKKTIFIDM…YVHDARKNGL (95 aa)) form the Rhodanese domain. Catalysis depends on Cys199, which acts as the Cysteine persulfide intermediate.

It belongs to the TrhO family.

The catalysed reaction is uridine(34) in tRNA + AH2 + O2 = 5-hydroxyuridine(34) in tRNA + A + H2O. Catalyzes oxygen-dependent 5-hydroxyuridine (ho5U) modification at position 34 in tRNAs. The chain is tRNA uridine(34) hydroxylase from Buchnera aphidicola subsp. Acyrthosiphon pisum (strain Tuc7).